A 100-amino-acid polypeptide reads, in one-letter code: Replication restart protein PriB (100 aa).

An SSB domain is found at 1–99 (MGFNNLVSLA…LRIQNIKEYK (99 aa)).

It belongs to the PriB family. As to quaternary structure, homodimer. Interacts with PriA and DnaT. Component of the replication restart primosome. Primosome assembly occurs via a 'hand-off' mechanism. PriA binds to replication forks, subsequently PriB then DnaT bind; DnaT then displaces ssDNA to generate the helicase loading substrate.

Functionally, involved in the restart of stalled replication forks, which reloads the replicative helicase on sites other than the origin of replication; the PriA-PriB pathway is the major replication restart pathway. During primosome assembly it facilitates complex formation between PriA and DnaT on DNA; stabilizes PriA on DNA. Stimulates the DNA unwinding activity of PriA helicase. This is Replication restart protein PriB from Neisseria meningitidis serogroup C (strain 053442).